We begin with the raw amino-acid sequence, 318 residues long: Protein disulfide-isomerase MPD1 (318 aa).

The first 21 residues, 1–21 (MLFLNIIKLLLGLFIMNEVKA), serve as a signal peptide directing secretion. The 137-residue stretch at 22-158 (QNFYDSDPHI…SLSRIRSYVK (137 aa)) folds into the Thioredoxin domain. Asn47 carries an N-linked (GlcNAc...) asparagine glycan. Residues Cys59 and Cys62 are joined by a disulfide bond. An N-linked (GlcNAc...) asparagine glycan is attached at Asn307. Positions 315–318 (HDEL) match the Prevents secretion from ER motif.

It belongs to the protein disulfide isomerase family. Interacts with CNE1 and EPS1.

It is found in the endoplasmic reticulum lumen. The enzyme catalyses Catalyzes the rearrangement of -S-S- bonds in proteins.. In terms of biological role, participates in the folding of proteins containing disulfide bonds. The chain is Protein disulfide-isomerase MPD1 (MPD1) from Saccharomyces cerevisiae (strain ATCC 204508 / S288c) (Baker's yeast).